The chain runs to 32 residues: Dermatoxin-J3 (32 aa).

At Q32 the chain carries Glutamine amide.

Expressed by the skin glands.

It is found in the secreted. Its function is as follows. Antimicrobial peptide. This Phasmahyla jandaia (Jandaia leaf frog) protein is Dermatoxin-J3.